The following is a 245-amino-acid chain: Hydrolase pyvD (245 aa).

Catalysis depends on residues Cys-133, Asp-179, and His-211.

The protein belongs to the dienelactone hydrolase family.

It functions in the pathway secondary metabolite biosynthesis. In terms of biological role, hydrolase; part of the gene cluster that mediates the biosynthesis of pyranoviolin A, a pyranonigrin analog with a C-3 methoxy group. Initially, the PKS portion of pyvA synthesizes C-10 carbon chain from 5 molecules of malonyl-CoA, which is then condensed with the thiolation (T) domain-bound glycine activated by the adenylation (A) domain. The subsequent chain release by Dieckmann condensation (DKC) could be catalyzed by the TE domain present at the C-terminus of pyvA and/or the alpha/beta hydrolase pyvD, installing the tetramic acid moiety. The FAD-dependent monooxygenase pyvC next epoxidizes one of the olefins of the polyketide part, and the epoxide ring-opening induces the dihydro-gamma-pyrone ring formation. The cytochrome P450 monooxygeanse pyvB would be responsible for the 2 consecutive reactions, in which the dihydro-gamma-pyrone is oxidized to gamma-pyrone and C-7 is hydroxylated to yield pyranonigrin F. Finally, the O-methyltransferase pyvH methylates the C-3 hydroxy group to complete the biosynthesis. In Aspergillus violaceofuscus (strain CBS 115571), this protein is Hydrolase pyvD.